The chain runs to 55 residues: ATP synthase F(0) complex subunit 8 (55 aa).

The chain crosses the membrane as a helical span at residues 9 to 29 (WFFIMIMSWAVFLLLIQPKLL).

This sequence belongs to the ATPase protein 8 family. Component of the ATP synthase complex composed at least of ATP5F1A/subunit alpha, ATP5F1B/subunit beta, ATP5MC1/subunit c (homooctomer), MT-ATP6/subunit a, MT-ATP8/subunit 8, ATP5ME/subunit e, ATP5MF/subunit f, ATP5MG/subunit g, ATP5MK/subunit k, ATP5MJ/subunit j, ATP5F1C/subunit gamma, ATP5F1D/subunit delta, ATP5F1E/subunit epsilon, ATP5PF/subunit F6, ATP5PB/subunit b, ATP5PD/subunit d, ATP5PO/subunit OSCP. ATP synthase complex consists of a soluble F(1) head domain (subunits alpha(3) and beta(3)) - the catalytic core - and a membrane F(0) domain - the membrane proton channel (subunits c, a, 8, e, f, g, k and j). These two domains are linked by a central stalk (subunits gamma, delta, and epsilon) rotating inside the F1 region and a stationary peripheral stalk (subunits F6, b, d, and OSCP).

The protein localises to the mitochondrion membrane. In terms of biological role, subunit 8, of the mitochondrial membrane ATP synthase complex (F(1)F(0) ATP synthase or Complex V) that produces ATP from ADP in the presence of a proton gradient across the membrane which is generated by electron transport complexes of the respiratory chain. ATP synthase complex consist of a soluble F(1) head domain - the catalytic core - and a membrane F(1) domain - the membrane proton channel. These two domains are linked by a central stalk rotating inside the F(1) region and a stationary peripheral stalk. During catalysis, ATP synthesis in the catalytic domain of F(1) is coupled via a rotary mechanism of the central stalk subunits to proton translocation. In vivo, can only synthesize ATP although its ATP hydrolase activity can be activated artificially in vitro. Part of the complex F(0) domain. This is ATP synthase F(0) complex subunit 8 from Rhea americana (Greater rhea).